The sequence spans 27 residues: Urumin (27 aa).

As to expression, expressed by the skin glands.

It localises to the secreted. In terms of biological role, amphibian peptide that shows viricidal activity against human H1N1 influenza A virus. It specifically targets the conserved stalk region of H1 hemagglutinin, and acts by actively destroying influenza virions. It shows a reduced activity on human H3N2 influenza A virus and no activity against other viruses (HIV, SIV, HSV-II, hepatitis C, Ebola, Zika, and Dengue viruses). In vivo, the peptide also protects mice infected with mouse-adapted influenza virus from lethal influenza infection. The peptide synthesized in D-amino acids is inactive. This chain is Urumin, found in Hydrophylax bahuvistara (Wide-spread fungoid frog).